A 284-amino-acid chain; its full sequence is RNA polymerase sigma factor RpoH (284 aa).

The tract at residues methionine 54–arginine 123 is sigma-70 factor domain-2. An Interaction with polymerase core subunit RpoC motif is present at residues aspartate 78–glutamine 81. Residues alanine 229 to glycine 280 form a sigma-70 factor domain-4 region. The H-T-H motif DNA-binding region spans leucine 253–lysine 272.

It belongs to the sigma-70 factor family. RpoH subfamily. As to quaternary structure, interacts with the RNA polymerase core enzyme.

It is found in the cytoplasm. In terms of biological role, sigma factors are initiation factors that promote the attachment of RNA polymerase to specific initiation sites and are then released. This sigma factor is involved in regulation of expression of heat shock genes. This is RNA polymerase sigma factor RpoH from Pseudomonas aeruginosa (strain ATCC 15692 / DSM 22644 / CIP 104116 / JCM 14847 / LMG 12228 / 1C / PRS 101 / PAO1).